Here is a 204-residue protein sequence, read N- to C-terminus: Dual specificity protein phosphatase 18 (204 aa).

A Tyrosine-protein phosphatase domain is found at 19 to 160; sequence GLSQITKSLF…LIHYEFQLFG (142 aa). Positions 95–141 are sufficient for mitochondrial localization; the sequence is MKQGRTLLHCAAGVSRSAALCLAYLMKYHVMSLLDAHAWTKSRRPII. C104 functions as the Phosphocysteine intermediate in the catalytic mechanism.

This sequence belongs to the protein-tyrosine phosphatase family. Non-receptor class dual specificity subfamily.

It is found in the cytoplasm. Its subcellular location is the nucleus. It localises to the mitochondrion inner membrane. It catalyses the reaction O-phospho-L-tyrosyl-[protein] + H2O = L-tyrosyl-[protein] + phosphate. The catalysed reaction is O-phospho-L-seryl-[protein] + H2O = L-seryl-[protein] + phosphate. The enzyme catalyses O-phospho-L-threonyl-[protein] + H2O = L-threonyl-[protein] + phosphate. Functionally, can dephosphorylate single and diphosphorylated synthetic MAPK peptides, with preference for the phosphotyrosine and diphosphorylated forms over phosphothreonine. In vitro, dephosphorylates p-nitrophenyl phosphate (pNPP). The protein is Dual specificity protein phosphatase 18 (Dusp18) of Rattus norvegicus (Rat).